The sequence spans 592 residues: 3-hydroxy-3-methylglutaryl-coenzyme A reductase 1 (592 aa).

The segment at 1-45 is disordered; that stretch reads MDLRRRPPKPPVTNNNNSNGSFRSYQPRTSDDDHRRRATTIAPPP. The segment covering 12–28 has biased composition (polar residues); that stretch reads VTNNNNSNGSFRSYQPR. 2 N-linked (GlcNAc...) asparagine glycosylation sites follow: asparagine 16 and asparagine 19. The next 2 helical transmembrane spans lie at 47-69 and 97-117; these read ASDA…FFSV and AIIA…IDFV. The interval 118–171 is linker; it reads QSFISRASGDAWDLADTIDDDDHRLVTCSPPTPIVSVAKLPNPEPIVTESLPEE. The interval 172 to 592 is catalytic; the sequence is DEEIVKSVID…GATTTTTTTT (421 aa). The active-site Charge relay system is the glutamate 265. A glycan (N-linked (GlcNAc...) asparagine) is linked at asparagine 329. Active-site charge relay system residues include lysine 397 and aspartate 473. Catalysis depends on histidine 571, which acts as the Proton donor. An N-linked (GlcNAc...) asparagine glycan is attached at asparagine 575. Serine 577 carries the post-translational modification Phosphoserine.

The protein belongs to the HMG-CoA reductase family. In terms of assembly, interacts (via N-terminus) with B''ALPHA and B''BETA. Inactivated by phosphorylation at Ser-577 by KIN10 activated form. Probably also phosphorylated at additional sites. Found in all tissues. Isoform Short is expressed at low levels specifically in flowers. Expressed in both the tapetum and microspores.

The protein localises to the endoplasmic reticulum membrane. It carries out the reaction (R)-mevalonate + 2 NADP(+) + CoA = (3S)-3-hydroxy-3-methylglutaryl-CoA + 2 NADPH + 2 H(+). It functions in the pathway metabolic intermediate biosynthesis; (R)-mevalonate biosynthesis; (R)-mevalonate from acetyl-CoA: step 3/3. Regulated at the post-translational level in response to alterations of sphingolipid and sterol biosynthetic pathways. Negatively regulated by a PP2A-dependent dephosphorylation occurring at a site different than Ser-577. Completely inhibited by mevinolin (IC(50) = 12.5 nM). Reversibly inactivated by phosphorylation at Ser-577 by spinach or Brassica oleracea HMGR kinases in a cell-free system. Down-regulated by KIN10 through its phosphorylation at Ser-577. Catalyzes the synthesis of mevalonate, the specific precursor of all isoprenoid compounds present in plants. The sequence is that of 3-hydroxy-3-methylglutaryl-coenzyme A reductase 1 from Arabidopsis thaliana (Mouse-ear cress).